The chain runs to 116 residues: Iron-sulfur cluster insertion protein ErpA (116 aa).

3 residues coordinate iron-sulfur cluster: Cys44, Cys108, and Cys110.

This sequence belongs to the HesB/IscA family. Homodimer. It depends on iron-sulfur cluster as a cofactor.

In terms of biological role, required for insertion of 4Fe-4S clusters for at least IspG. This is Iron-sulfur cluster insertion protein ErpA from Pseudomonas syringae pv. syringae (strain B728a).